Consider the following 225-residue polypeptide: Urease subunit alpha (225 aa).

The tract at residues 1–102 (MRLTPKELDK…LVTIHNPIED (102 aa)) is urease gamma. The tract at residues 103–225 (NGKLTPGEYI…ANAAQKHFIH (123 aa)) is urease beta.

In the N-terminal section; belongs to the urease gamma subunit family. It in the C-terminal section; belongs to the urease beta subunit family. In terms of assembly, heterohexamer of 3 UreA (alpha) and 3 UreB (beta) subunits.

It is found in the cytoplasm. It catalyses the reaction urea + 2 H2O + H(+) = hydrogencarbonate + 2 NH4(+). It functions in the pathway nitrogen metabolism; urea degradation; CO(2) and NH(3) from urea (urease route): step 1/1. The polypeptide is Urease subunit alpha (Helicobacter hepaticus (strain ATCC 51449 / 3B1)).